The chain runs to 647 residues: Protein FAM161B (647 aa).

Disordered regions lie at residues 1 to 39, 89 to 110, and 135 to 167; these read MTVG…GDGL, SDPE…FFQD, and LNNL…SWAS. Residues 91–105 show a composition bias toward acidic residues; the sequence is PESDENLSEDEEDLE. Residues 262–292 are a coiled coil; sequence LEKEEQLKEAARQRDLAATAEAKISKQKATR. Residues 332–350 show a composition bias toward polar residues; it reads PIASSSNRANPQPRTATRT. Disordered regions lie at residues 332–352 and 388–439; these read PIAS…RTQQ and KRRE…RSRS. Residues 510–546 are a coiled coil; that stretch reads LEEVFKAKLKENRNNDRKRAKEYKKELEEMKQRIQTR. The tract at residues 583–647 is disordered; that stretch reads KGQGTRAVQE…QSPENLVSLA (65 aa). The segment covering 590–602 has biased composition (basic and acidic residues); the sequence is VQEKETKIKDFPR. The segment covering 637–647 has biased composition (polar residues); it reads HQSPENLVSLA.

It belongs to the FAM161 family. In terms of assembly, interacts with FAM161A. As to expression, ubiquitously expressed.

This Homo sapiens (Human) protein is Protein FAM161B (FAM161B).